A 329-amino-acid polypeptide reads, in one-letter code: MKFGSKIRRLAVAAVAGAIALGASFAVAQAPTFFRIGTGGTAGTYYPIGGLIANAISGAGEKGVPGLVATAVSSNGSVANINAIKSGALESGFTQSDVAYWAYNGTGLYDGKGKVEDLRLLATLYPETIHIVARKDANIKSVADLKGKRVSLDEPGSGTIVDARIVLEAYGLTEDDIKAEHLKPGPAGERLKDGALDAYFFVGGYPTGAISELAISNGISLVPISGPEADKILEKYSFFSKDVVPAGAYKDVAETPTLAVAAQWVTSAKQPDDLIYNITKVLWNEDTRKALDAGHAKGKLIKLDSATSSLGIPLHPGAERFYKEAGVLK.

Residues Met1–Ala28 form the signal peptide.

The chain is 31 kDa immunogenic protein (bcsP31) from Brucella abortus biovar 1 (strain 9-941).